We begin with the raw amino-acid sequence, 374 residues long: Zinc finger CCCH domain-containing protein 15 homolog (374 aa).

Positions 1–20 (MPPKQQGPSKKSEQKRKEKV) are disordered. The span at 10–20 (KKSEQKRKEKV) shows a compositional bias: basic and acidic residues. 2 consecutive C3H1-type zinc fingers follow at residues 90–117 (DPKS…HDLA) and 166–199 (VCKY…HCLP).

The protein belongs to the ZC3H15/TMA46 family.

The sequence is that of Zinc finger CCCH domain-containing protein 15 homolog from Caenorhabditis elegans.